A 117-amino-acid chain; its full sequence is Anti-sigma F factor antagonist (117 aa).

In terms of domain architecture, STAS spans 3-113 (LQIEMEHHRG…DNEVNALTEL (111 aa)). Residue Ser58 is modified to Phosphoserine.

Belongs to the anti-sigma-factor antagonist family. Phosphorylated by SpoIIAB on a serine residue.

Its function is as follows. In the phosphorylated form it could act as an anti-anti-sigma factor that counteracts SpoIIAB and thus releases sigma f from inhibition. This Paenibacillus polymyxa (Bacillus polymyxa) protein is Anti-sigma F factor antagonist (spoIIAA).